The following is a 365-amino-acid chain: Formamidopyrimidine-DNA glycosylase (365 aa).

P2 acts as the Schiff-base intermediate with DNA in catalysis. E3 acts as the Proton donor in catalysis. The active-site Proton donor; for beta-elimination activity is the K61. The interval 121–150 is disordered; it reads RGRLAGHGDGMDGTSRTGSTLPGTGGTENS. A compositionally biased stretch (polar residues) spans 134–150; it reads TSRTGSTLPGTGGTENS. DNA-binding residues include H186, R205, and R246. Residues 331–365 form an FPG-type zinc finger; sequence RVYGRGGQPCRHCGTTLATAQVAGRTTVFCPQCQR. R355 serves as the catalytic Proton donor; for delta-elimination activity.

The protein belongs to the FPG family. Monomer. Zn(2+) serves as cofactor.

The catalysed reaction is Hydrolysis of DNA containing ring-opened 7-methylguanine residues, releasing 2,6-diamino-4-hydroxy-5-(N-methyl)formamidopyrimidine.. It carries out the reaction 2'-deoxyribonucleotide-(2'-deoxyribose 5'-phosphate)-2'-deoxyribonucleotide-DNA = a 3'-end 2'-deoxyribonucleotide-(2,3-dehydro-2,3-deoxyribose 5'-phosphate)-DNA + a 5'-end 5'-phospho-2'-deoxyribonucleoside-DNA + H(+). Involved in base excision repair of DNA damaged by oxidation or by mutagenic agents. Acts as a DNA glycosylase that recognizes and removes damaged bases. Has a preference for oxidized purines, such as 7,8-dihydro-8-oxoguanine (8-oxoG). Has AP (apurinic/apyrimidinic) lyase activity and introduces nicks in the DNA strand. Cleaves the DNA backbone by beta-delta elimination to generate a single-strand break at the site of the removed base with both 3'- and 5'-phosphates. The sequence is that of Formamidopyrimidine-DNA glycosylase from Nitratidesulfovibrio vulgaris (strain ATCC 29579 / DSM 644 / CCUG 34227 / NCIMB 8303 / VKM B-1760 / Hildenborough) (Desulfovibrio vulgaris).